A 309-amino-acid polypeptide reads, in one-letter code: Dihydroorotate dehydrogenase B (NAD(+)), catalytic subunit (309 aa).

Residues serine 21 and 45-46 (KA) each bind FMN. Residues lysine 45 and 69-73 (NAIGL) contribute to the substrate site. FMN is bound by residues asparagine 99 and asparagine 127. A substrate-binding site is contributed by asparagine 127. The active-site Nucleophile is cysteine 130. Residues lysine 165 and isoleucine 191 each coordinate FMN. 192–193 (NT) is a substrate binding site. Residues glycine 217, 243–244 (GG), and 265–266 (GT) contribute to the FMN site.

It belongs to the dihydroorotate dehydrogenase family. Type 1 subfamily. Heterotetramer of 2 PyrK and 2 PyrD type B subunits. Requires FMN as cofactor.

Its subcellular location is the cytoplasm. It carries out the reaction (S)-dihydroorotate + NAD(+) = orotate + NADH + H(+). It functions in the pathway pyrimidine metabolism; UMP biosynthesis via de novo pathway; orotate from (S)-dihydroorotate (NAD(+) route): step 1/1. In terms of biological role, catalyzes the conversion of dihydroorotate to orotate with NAD(+) as electron acceptor. The protein is Dihydroorotate dehydrogenase B (NAD(+)), catalytic subunit (pyrD) of Bacillus cereus (strain ATCC 14579 / DSM 31 / CCUG 7414 / JCM 2152 / NBRC 15305 / NCIMB 9373 / NCTC 2599 / NRRL B-3711).